An 801-amino-acid chain; its full sequence is PR domain zinc finger protein 4 (801 aa).

Positions 412–529 constitute an SET domain; it reads KQLVLRQSIV…PENELLFYYS (118 aa). Residues 545–566 form a C2H2-type 1; atypical zinc finger; sequence HLCNCGKECNSYTEFKAHLTSH. C2H2-type zinc fingers lie at residues 618-640, 646-668, 674-696, and 702-724; these read HKCDFCSKAFSDPSNLRTHLKIH, YRCTLCDKSFTQKAHLESHMVIH, LKCDYCDKLFMRRQDLKQHVLIH, and IKCPKCDKLFLRTNHLKKHLNSH. The C2H2-type 6; atypical zinc-finger motif lies at 730-752; the sequence is YVCEKCTKAYLTKYHLTRHLKTC. The interval 751-782 is disordered; it reads TCKGPTSSSSAPEEEEEDDSEEEDLADSVGTE. Positions 762 to 776 are enriched in acidic residues; it reads PEEEEEDDSEEEDLA.

This sequence belongs to the class V-like SAM-binding methyltransferase superfamily.

The protein resides in the nucleus. May function as a transcription factor involved in cell differentiation. The protein is PR domain zinc finger protein 4 (PRDM4) of Pongo abelii (Sumatran orangutan).